Consider the following 175-residue polypeptide: Co-chaperone protein HscB homolog (175 aa).

The J domain maps to 2–76; it reads NYFALFNLTP…RAEHMLELRG (75 aa).

It belongs to the HscB family. Interacts with HscA and stimulates its ATPase activity.

Functionally, co-chaperone involved in the maturation of iron-sulfur cluster-containing proteins. Seems to help targeting proteins to be folded toward HscA. This is Co-chaperone protein HscB homolog from Pseudoalteromonas atlantica (strain T6c / ATCC BAA-1087).